The following is a 131-amino-acid chain: Glutaredoxin arsenate reductase (131 aa).

Active-site nucleophile residues include C8 and C80. 2 cysteine pairs are disulfide-bonded: C8–C80 and C80–C82.

It belongs to the low molecular weight phosphotyrosine protein phosphatase family. As to quaternary structure, homodimer.

It catalyses the reaction O-phospho-L-tyrosyl-[protein] + H2O = L-tyrosyl-[protein] + phosphate. It carries out the reaction [glutaredoxin]-dithiol + arsenate + glutathione + H(+) = glutathionyl-S-S-[glutaredoxin] + arsenite + H2O. Reduces arsenate [As(V)] to arsenite [As(III)] using glutathione and glutaredoxin as sources of reducing equivalents. GrxA is the most effective electron donor in vivo compared to other glutaredoxins. Constitutes the major arsenate reductase compared to ArsI1 and ArsI2. Also shows weak phosphatase activity toward p-nitrophenyl phosphate. In Synechocystis sp. (strain ATCC 27184 / PCC 6803 / Kazusa), this protein is Glutaredoxin arsenate reductase (arsC).